A 375-amino-acid polypeptide reads, in one-letter code: Chanoclavine-I aldehyde reductase ifgG (375 aa).

FMN contacts are provided by residues Pro-31–Thr-33, Ala-66, Gln-108, and His-176. His-176 and Asn-179 together coordinate substrate. The active-site Proton donor is the Tyr-181. Residues Lys-228, Gly-300, Gly-325–Arg-326, and Arg-326 contribute to the FMN site. Tyr-353 is a substrate binding site.

This sequence belongs to the NADH:flavin oxidoreductase/NADH oxidase family. FMN serves as cofactor.

The enzyme catalyses dihydrochanoclavine-I aldehyde + NADP(+) = chanoclavine-I aldehyde + NADPH + H(+). Its pathway is alkaloid biosynthesis; ergot alkaloid biosynthesis. Chanoclavine-I aldehyde reductase; part of the gene cluster that mediates the biosynthesis of isofumigaclavines, fungal ergot alkaloids. The tryptophan dimethylallyltransferase ifgA catalyzes the first step of ergot alkaloid biosynthesis by condensing dimethylallyl diphosphate (DMAP) and tryptophan to form 4-dimethylallyl-L-tryptophan. The second step is catalyzed by the methyltransferase ifgB that methylates 4-dimethylallyl-L-tryptophan in the presence of S-adenosyl-L-methionine, resulting in the formation of N-methyl-dimethylallyl-L-tryptophan. The catalase ifgD and the FAD-dependent oxidoreductase ifgC then transform N-methyl-dimethylallyl-L-tryptophan to chanoclavine-I which is further oxidized by ifgE in the presence of NAD(+), resulting in the formation of chanoclavine-I aldehyde. The chanoclavine-I aldehyde reductases ifgG and/or fgaOx3 reduce chanoclavine-I aldehyde to dihydrochanoclavine-I aldehyde that spontaneously dehydrates to form 6,8-dimethyl-6,7-didehydroergoline. The festuclavine dehydrogenases ifgF1 and/or ifgF2 then catalyze the reduction of 6,8-dimethyl-6,7-didehydroergoline to form festuclavine. Hydrolysis of festuclavine by a yet undetermined cytochrome P450 monooxygenase (called ifgH) then leads to the formation of isofumigaclavine B which is in turn acetylated by ifgI to isofumigaclavine A. Penicillium roqueforti has interestingly at least two sets of genes for the consumption of chanoclavine-I aldehyde on three different loci, the OYEs ifgG/fgaOx3 and the festuclavine synthase homologs ifgF1/ifgF2. The reason for the duplication of these genes is unclear, probably to ensure the conversion of chanoclavine-I aldehyde by differential gene expression under various environmental conditions. The chain is Chanoclavine-I aldehyde reductase ifgG from Penicillium roqueforti (strain FM164).